Here is a 313-residue protein sequence, read N- to C-terminus: Putative stilbene synthase 2 (313 aa).

Residue cysteine 88 is part of the active site. Residues leucine 191 and 229–231 each bind substrate; that span reads GGP.

Belongs to the thiolase-like superfamily. Chalcone/stilbene synthases family. Homodimer.

It is found in the cytoplasm. It catalyses the reaction 4-coumaroyl-CoA + 3 malonyl-CoA + 3 H(+) = trans-resveratrol + 4 CO2 + 4 CoA. Its pathway is phytoalexin biosynthesis; 3,4',5-trihydroxystilbene biosynthesis; 3,4',5-trihydroxystilbene from trans-4-coumarate: step 2/2. The chain is Putative stilbene synthase 2 from Arachis hypogaea (Peanut).